The chain runs to 360 residues: Peptide chain release factor 1 (360 aa).

An N5-methylglutamine modification is found at Gln-234.

Belongs to the prokaryotic/mitochondrial release factor family. Methylated by PrmC. Methylation increases the termination efficiency of RF1.

It is found in the cytoplasm. In terms of biological role, peptide chain release factor 1 directs the termination of translation in response to the peptide chain termination codons UAG and UAA. This is Peptide chain release factor 1 from Clostridium botulinum (strain Eklund 17B / Type B).